The following is a 634-amino-acid chain: 1-deoxy-D-xylulose-5-phosphate synthase (634 aa).

Residues H74 and 115–117 each bind thiamine diphosphate; that span reads AHS. D146 lines the Mg(2+) pocket. Thiamine diphosphate is bound by residues 147–148, N176, Y283, and E365; that span reads GA. N176 contributes to the Mg(2+) binding site.

Belongs to the transketolase family. DXPS subfamily. In terms of assembly, homodimer. The cofactor is Mg(2+). Thiamine diphosphate serves as cofactor.

It carries out the reaction D-glyceraldehyde 3-phosphate + pyruvate + H(+) = 1-deoxy-D-xylulose 5-phosphate + CO2. Its pathway is metabolic intermediate biosynthesis; 1-deoxy-D-xylulose 5-phosphate biosynthesis; 1-deoxy-D-xylulose 5-phosphate from D-glyceraldehyde 3-phosphate and pyruvate: step 1/1. Catalyzes the acyloin condensation reaction between C atoms 2 and 3 of pyruvate and glyceraldehyde 3-phosphate to yield 1-deoxy-D-xylulose-5-phosphate (DXP). This chain is 1-deoxy-D-xylulose-5-phosphate synthase, found in Burkholderia ambifaria (strain MC40-6).